A 218-amino-acid chain; its full sequence is Small ribosomal subunit protein uS3c (218 aa).

The KH type-2 domain maps to 47–118 (IQKTIKISSG…KLNIAITRIA (72 aa)).

This sequence belongs to the universal ribosomal protein uS3 family. As to quaternary structure, part of the 30S ribosomal subunit.

The protein localises to the plastid. It is found in the chloroplast. The chain is Small ribosomal subunit protein uS3c (rps3) from Lotus japonicus (Lotus corniculatus var. japonicus).